A 328-amino-acid polypeptide reads, in one-letter code: Biotin synthase (328 aa).

The region spanning 48 to 275 (NRIQLSKLLN…KSHVRLTAGR (228 aa)) is the Radical SAM core domain. Positions 63, 67, and 70 each coordinate [4Fe-4S] cluster. [2Fe-2S] cluster contacts are provided by Cys-107, Cys-138, Cys-198, and Arg-270.

It belongs to the radical SAM superfamily. Biotin synthase family. As to quaternary structure, homodimer. [4Fe-4S] cluster is required as a cofactor. [2Fe-2S] cluster serves as cofactor.

It catalyses the reaction (4R,5S)-dethiobiotin + (sulfur carrier)-SH + 2 reduced [2Fe-2S]-[ferredoxin] + 2 S-adenosyl-L-methionine = (sulfur carrier)-H + biotin + 2 5'-deoxyadenosine + 2 L-methionine + 2 oxidized [2Fe-2S]-[ferredoxin]. The protein operates within cofactor biosynthesis; biotin biosynthesis; biotin from 7,8-diaminononanoate: step 2/2. Its function is as follows. Catalyzes the conversion of dethiobiotin (DTB) to biotin by the insertion of a sulfur atom into dethiobiotin via a radical-based mechanism. This chain is Biotin synthase, found in Brucella ovis (strain ATCC 25840 / 63/290 / NCTC 10512).